Consider the following 100-residue polypeptide: UPF0213 protein YhbQ (100 aa).

The region spanning 2–77 (TPWFLYLIRT…KQLTKRQKER (76 aa)) is the GIY-YIG domain.

It belongs to the UPF0213 family.

In Escherichia coli O17:K52:H18 (strain UMN026 / ExPEC), this protein is UPF0213 protein YhbQ.